We begin with the raw amino-acid sequence, 122 residues long: Large ribosomal subunit protein bL12 (122 aa).

The protein belongs to the bacterial ribosomal protein bL12 family. In terms of assembly, homodimer. Part of the ribosomal stalk of the 50S ribosomal subunit. Forms a multimeric L10(L12)X complex, where L10 forms an elongated spine to which 2 to 4 L12 dimers bind in a sequential fashion. Binds GTP-bound translation factors.

Forms part of the ribosomal stalk which helps the ribosome interact with GTP-bound translation factors. Is thus essential for accurate translation. The polypeptide is Large ribosomal subunit protein bL12 (Xylella fastidiosa (strain 9a5c)).